A 1226-amino-acid polypeptide reads, in one-letter code: Methionine synthase (1226 aa).

The 321-residue stretch at 6–326 (RQQLEQQLKQ…EHIAAIAKAV (321 aa)) folds into the Hcy-binding domain. Residues cysteine 248, cysteine 311, and cysteine 312 each contribute to the Zn(2+) site. The Pterin-binding domain maps to 357-618 (FVNVGERTNV…VPLKLREAVE (262 aa)). Residues 651 to 745 (SALEWRAWPV…FINAQKSGST (95 aa)) form the B12-binding N-terminal domain. Residues glutamate 695, 757 to 761 (GDVHD), histidine 760, serine 805, threonine 809, and alanine 861 contribute to the methylcob(III)alamin site. One can recognise a B12-binding domain in the interval 747 to 882 (NGKILLATVK…SDEQRPGFIE (136 aa)). In terms of domain architecture, AdoMet activation spans 898–1226 (KTPKSRPVTL…EKWLAPNLDA (329 aa)). S-adenosyl-L-methionine contacts are provided by residues aspartate 948, arginine 1136, and 1191-1192 (YF).

Belongs to the vitamin-B12 dependent methionine synthase family. Methylcob(III)alamin serves as cofactor. The cofactor is Zn(2+).

The enzyme catalyses (6S)-5-methyl-5,6,7,8-tetrahydrofolate + L-homocysteine = (6S)-5,6,7,8-tetrahydrofolate + L-methionine. The protein operates within amino-acid biosynthesis; L-methionine biosynthesis via de novo pathway; L-methionine from L-homocysteine (MetH route): step 1/1. In terms of biological role, catalyzes the transfer of a methyl group from methyl-cobalamin to homocysteine, yielding enzyme-bound cob(I)alamin and methionine. Subsequently, remethylates the cofactor using methyltetrahydrofolate. This Vibrio cholerae serotype O1 (strain ATCC 39315 / El Tor Inaba N16961) protein is Methionine synthase (metH).